Reading from the N-terminus, the 83-residue chain is Cytochrome b559 subunit alpha (83 aa).

A helical transmembrane segment spans residues 21–35 (VIHSITIPSLFIAGW). H23 is a heme binding site.

Belongs to the PsbE/PsbF family. Heterodimer of an alpha subunit and a beta subunit. PSII is composed of 1 copy each of membrane proteins PsbA, PsbB, PsbC, PsbD, PsbE, PsbF, PsbH, PsbI, PsbJ, PsbK, PsbL, PsbM, PsbT, PsbX, PsbY, PsbZ, Psb30/Ycf12, at least 3 peripheral proteins of the oxygen-evolving complex and a large number of cofactors. It forms dimeric complexes. Heme b is required as a cofactor.

The protein resides in the plastid. It localises to the chloroplast thylakoid membrane. Its function is as follows. This b-type cytochrome is tightly associated with the reaction center of photosystem II (PSII). PSII is a light-driven water:plastoquinone oxidoreductase that uses light energy to abstract electrons from H(2)O, generating O(2) and a proton gradient subsequently used for ATP formation. It consists of a core antenna complex that captures photons, and an electron transfer chain that converts photonic excitation into a charge separation. This is Cytochrome b559 subunit alpha from Psilotum nudum (Whisk fern).